The following is a 206-amino-acid chain: Alpha-S1-casein (206 aa).

Residues 1–15 form the signal peptide; sequence MKLLIFICLAAVALA. 8 positions are modified to phosphoserine: Ser-33, Ser-77, Ser-78, Ser-79, Ser-80, Ser-81, Ser-82, and Ser-89. Residues 67 to 106 form a disordered region; the sequence is HGMEGHEQRGSSSSSSEEVVGNSAEQKHVQKEEDVPSQSY. The span at 91 to 100 shows a compositional bias: basic and acidic residues; that stretch reads EQKHVQKEED.

This sequence belongs to the alpha-casein family. In terms of tissue distribution, mammary gland specific. Secreted in milk.

It is found in the secreted. Important role in the capacity of milk to transport calcium phosphate. This chain is Alpha-S1-casein (CSN1S1), found in Sus scrofa (Pig).